The chain runs to 168 residues: S-ribosylhomocysteine lyase (168 aa).

Fe cation contacts are provided by H54, H58, and C128.

It belongs to the LuxS family. Homodimer. Fe cation serves as cofactor.

It carries out the reaction S-(5-deoxy-D-ribos-5-yl)-L-homocysteine = (S)-4,5-dihydroxypentane-2,3-dione + L-homocysteine. In terms of biological role, involved in the synthesis of autoinducer 2 (AI-2) which is secreted by bacteria and is used to communicate both the cell density and the metabolic potential of the environment. The regulation of gene expression in response to changes in cell density is called quorum sensing. Catalyzes the transformation of S-ribosylhomocysteine (RHC) to homocysteine (HC) and 4,5-dihydroxy-2,3-pentadione (DPD). The polypeptide is S-ribosylhomocysteine lyase (Histophilus somni (strain 129Pt) (Haemophilus somnus)).